A 331-amino-acid chain; its full sequence is Oxygen-evolving enhancer protein 1-2, chloroplastic (331 aa).

The N-terminal 57 residues, 1 to 57 (MATSLQAAATFLQPAKIAASPSRNVHLRSNQTVGKSFGLDSSQARLTCSLHSDLKDF), are a transit peptide targeting the chloroplast. The transit peptide at 58-84 (AGKCSDAAKIAGFALATSALVVSGAGA) directs the protein to the thylakoid.

Belongs to the PsbO family.

The protein localises to the plastid. It is found in the chloroplast thylakoid membrane. Functionally, stabilizes the manganese cluster which is the primary site of water splitting. Regulates dephosphorylation and turnover of the PSII reaction center D1 protein. In Arabidopsis thaliana (Mouse-ear cress), this protein is Oxygen-evolving enhancer protein 1-2, chloroplastic (PSBO2).